The primary structure comprises 69 residues: Putative membrane protein insertion efficiency factor (69 aa).

This sequence belongs to the UPF0161 family.

The protein resides in the cell membrane. Its function is as follows. Could be involved in insertion of integral membrane proteins into the membrane. The polypeptide is Putative membrane protein insertion efficiency factor (Clostridium botulinum (strain Okra / Type B1)).